A 378-amino-acid polypeptide reads, in one-letter code: Alanine dehydrogenase (378 aa).

Residues Arg15 and Lys74 each coordinate substrate. His95 (proton donor/acceptor) is an active-site residue. NAD(+)-binding positions include Ser132, 176–177 (VV), Asp196, Ser218, 237–238 (VL), 265–268 (VAID), and 297–300 (VANM). Asp268 functions as the Proton donor/acceptor in the catalytic mechanism.

The protein belongs to the AlaDH/PNT family. Homohexamer. Trimer of dimer.

Its subcellular location is the cytoplasm. It carries out the reaction L-alanine + NAD(+) + H2O = pyruvate + NH4(+) + NADH + H(+). Its pathway is amino-acid degradation; L-alanine degradation via dehydrogenase pathway; NH(3) and pyruvate from L-alanine: step 1/1. Catalyzes the reversible oxidative deamination of L-alanine to pyruvate. Oxidative deamination proceeds through a sequential, ordered ternary-binary mechanism, where NAD(+) binds first followed by L-alanine; the products are released in the order ammonia, pyruvate and NADH. Disruption blocks sporulation probably in stage V; 20-30% sporulation can be restored if the media is supplemented with pyruvate, suggesting lack of pyruvate blocks sporulation. Thus it is a key factor in the assimilation of L-alanine as an energy source via the tricarboxylic acid cycle during sporulation. The sequence is that of Alanine dehydrogenase from Bacillus subtilis (strain 168).